Here is a 272-residue protein sequence, read N- to C-terminus: Exosome complex component Rrp42 (272 aa).

The protein belongs to the RNase PH family. Rrp42 subfamily. Component of the archaeal exosome complex. Forms a hexameric ring-like arrangement composed of 3 Rrp41-Rrp42 heterodimers. The hexameric ring associates with a trimer of Rrp4 and/or Csl4 subunits.

It is found in the cytoplasm. Its function is as follows. Non-catalytic component of the exosome, which is a complex involved in RNA degradation. Contributes to the structuring of the Rrp41 active site. This is Exosome complex component Rrp42 from Thermococcus kodakarensis (strain ATCC BAA-918 / JCM 12380 / KOD1) (Pyrococcus kodakaraensis (strain KOD1)).